The chain runs to 375 residues: MLKNWGKKLLLSIVGATLTCLLVLVVDQQSRHMLETQSDHEPGSAAAVHLRADLDPANPGDGGDPANSAQDSGTFSAYFNKLTRVRRDVEQVAAPSKDSAAPEEDITANDVFIAVKTTKKFHRSRMDLLMDTWISRNKEQTFIFTDGEDEELQKKTGNVISTNCSAAHSRQALSCKMAVEYDKFIESDKKWFCHVDDDNYVNVRTLVKLLSRYSHTNDIYIGKPSLDRPIQATERISESNMRPVNFWFATGGAGFCISRGLALKMSPWASGGHFMNTAEKIRLPDDCTIGYIIESVLGVKLIRSNLFHSHLENLHQVPQSEIHNQVTLSYGMFENKRNAILMKGAFSVEEDPSRFRSVHCLLYPDTPWCPWKAAY.

At 1–8 (MLKNWGKK) the chain is on the cytoplasmic side. A helical; Signal-anchor for type II membrane protein transmembrane segment spans residues 9–29 (LLLSIVGATLTCLLVLVVDQQ). The Lumenal portion of the chain corresponds to 30 to 375 (SRHMLETQSD…TPWCPWKAAY (346 aa)). Residues 53–73 (DLDPANPGDGGDPANSAQDSG) are disordered. Substrate is bound at residue Arg125. Asn163 carries N-linked (GlcNAc...) asparagine glycosylation. Cystine bridges form between Cys164/Cys175 and Cys193/Cys256. Asp197 contributes to the substrate binding site. Residue Asp198 participates in Mn(2+) binding. Asp286 is a catalytic residue. Residue His310 coordinates Mn(2+). Cysteines 360 and 369 form a disulfide.

Belongs to the glycosyltransferase 31 family. The cofactor is Mn(2+). Co(2+) serves as cofactor. In terms of processing, a soluble form may be derived from the membrane form by proteolytic processing. In terms of tissue distribution, detected in the neural tube, the eye and the otic vesicle, expression coincides with the region that produces the medial, intermediate and lateral neurons.

The protein resides in the golgi apparatus membrane. The enzyme catalyses 3-O-(alpha-L-fucosyl)-L-threonyl-[EGF-like domain protein] + UDP-N-acetyl-alpha-D-glucosamine = 3-O-(N-acetyl-beta-D-glucosaminyl-(1-&gt;3)-alpha-L-fucosyl)-L-threonyl-[EGF-like domain protein] + UDP + H(+). It carries out the reaction 3-O-(alpha-L-fucosyl)-L-seryl-[EGF-like domain protein] + UDP-N-acetyl-alpha-D-glucosamine = 3-O-(N-acetyl-beta-D-glucosaminyl-(1-&gt;3)-alpha-L-fucosyl)-L-seryl-[EGF-like domain protein] + UDP + H(+). Glycosyltransferase that initiates the elongation of O-linked fucose residues attached to EGF-like repeats in the extracellular domain of Notch molecules. Essential mediator of somite segmentation and patterning. May be involved in mesoderm development. The sequence is that of Beta-1,3-N-acetylglucosaminyltransferase lunatic fringe (lfng) from Xenopus laevis (African clawed frog).